The primary structure comprises 82 residues: MEEKNYDDGDTVTVDDDYQMGCTTPTRDDCRIPAYPPCPPPVRRKRSLLGFGKKREPPKKGYFQPPDLDLFFSVVAASQAAT.

The interval 1 to 26 (MEEKNYDDGDTVTVDDDYQMGCTTPT) is disordered. Residues 8–18 (DGDTVTVDDDY) are compositionally biased toward acidic residues.

Interacts with CDKA-1 and D-type cyclins. Expressed in columella cells in the roots and in root meristems after induction.

In terms of biological role, probable cyclin-dependent protein kinase (CDK) inhibitor that functions as a repressor of mitosis in the endoreduplication cell cycle. Acts as a potent cell cycle inhibitor, regulating a hydroxyurea-dependent checkpoint in leaves. Essential to activate a high-light-dependent cell cycle checkpoint. In Arabidopsis thaliana (Mouse-ear cress), this protein is Cyclin-dependent protein kinase inhibitor SMR5.